Here is a 390-residue protein sequence, read N- to C-terminus: Endothelial cell-selective adhesion molecule (390 aa).

Residues 1-29 (MISLPGPLVTNLLRFLFLGLSALAPPSRA) form the signal peptide. Positions 30 to 143 (ELQLHLPANQ…NGQASGHSIK (114 aa)) constitute an Ig-like V-type domain. At 30-248 (ELQLHLPANQ…LEVSTGPGAA (219 aa)) the chain is on the extracellular side. Residues asparagine 108, asparagine 169, asparagine 213, and asparagine 236 are each glycosylated (N-linked (GlcNAc...) asparagine). The Ig-like C2-type domain maps to 156–242 (PSCRLQGVPR…AQCNVTLEVS (87 aa)). A disulfide bond links cysteine 174 and cysteine 224. Residues 249–269 (VVAGAVVGTLVGLGLLAGLVL) traverse the membrane as a helical segment. Residues 270–390 (LYHRRGKALE…PAQSQAGSLV (121 aa)) are Cytoplasmic-facing. Serine 301 carries the phosphoserine modification. Residues 316 to 365 (ARALRPPHGPPRPGALTPTPSLSSQALPSPRLPTTDGANPQPISLIPGGV) are disordered. Phosphothreonine occurs at positions 332 and 334. Over residues 333 to 342 (PTPSLSSQAL) the composition is skewed to polar residues. 4 positions are modified to phosphoserine: serine 336, serine 339, serine 344, and serine 371.

Interacts with MAGI1.

It is found in the cell junction. The protein localises to the adherens junction. The protein resides in the tight junction. It localises to the cell membrane. In terms of biological role, can mediate aggregation most likely through a homophilic molecular interaction. This is Endothelial cell-selective adhesion molecule (ESAM) from Macaca fascicularis (Crab-eating macaque).